Reading from the N-terminus, the 1657-residue chain is Androglobin (1657 aa).

The segment covering 1 to 11 (MASKQAKRKEV) has biased composition (basic residues). Disordered stretches follow at residues 1-40 (MASKQAKRKEVHRINSAHGSDKSKDLYHFGSNVPPGSFEQ) and 321-398 (TKEN…SSDV). Residues 70–402 (KDKTAKSPIF…RPSSDVQYSM (333 aa)) form the Calpain catalytic domain. Residues 321–386 (TKENKDGKDG…DGEKEKEKFK (66 aa)) are compositionally biased toward basic and acidic residues. The 128-residue stretch at 762-889 (HVCSMTTFVI…EDVSLAEWVD (128 aa)) folds into the Globin; C-terminal part domain. Heme b-binding residues include Gln-791 and His-823. Residues 905–934 (EIAAAVKIQSMWKGCYVRLLMKARKPETKE) enclose the IQ domain. The region spanning 935 to 967 (NVTVADTLQKIWAVLEMNLEQYALSLLRLMFKS) is the Globin; N-terminal part domain. 4 disordered regions span residues 1184 to 1226 (SKQV…TDTG), 1288 to 1356 (KHEE…QEDP), 1422 to 1459 (TTDTTTSAPSPETLSVSQSQTKSSEEGELDTGKYADIK), and 1638 to 1657 (IEKKSPASDSQKKKKVGKKK). The span at 1321 to 1336 (EKSAEKEKLAKEKQAP) shows a compositional bias: basic and acidic residues. Composition is skewed to polar residues over residues 1341–1351 (QQVQMPTAVHS) and 1422–1443 (TTDTTTSAPSPETLSVSQSQTK). Residues 1585-1640 (DEVLEMYGEMRDSVDEARQKILDIREVYRNKLLEAERLRMEALAAQEAAVKIEIEK) adopt a coiled-coil conformation.

This sequence in the central section; belongs to the globin family. In the N-terminal section; belongs to the peptidase C2 family. Interacts with septin SEPT10; contributes to in vitro proteolytic cleavage of SEPT10 in a calmodulin-dependent manner. Interacts with CFAP69. Interacts with SPEF2. May interact with calmodulin. As to expression, strongly expressed in testis and lung. Weakly expressed in heart, brain, spleen, kidney and tongue.

Its subcellular location is the cell projection. It localises to the cilium. The protein resides in the flagellum. In terms of biological role, probable chimeric globin with a bis-histidyl six-coordinate heme-iron atom through which it could bind dioxygen, carbon monoxide and nitric oxide. Required for sperm flagellum formation and maturation of elongating spermatids, thus playing an essential role in male fertility. In Mus musculus (Mouse), this protein is Androglobin.